The primary structure comprises 491 residues: Protein nucleotidyltransferase YdiU (491 aa).

ATP is bound by residues Gly-88, Gly-90, Arg-91, Lys-111, Asp-123, Gly-124, Arg-174, and Arg-181. Asp-250 serves as the catalytic Proton acceptor. Mg(2+)-binding residues include Asn-251 and Asp-260. Asp-260 contacts ATP.

This sequence belongs to the SELO family. Mg(2+) is required as a cofactor. Requires Mn(2+) as cofactor.

It catalyses the reaction L-seryl-[protein] + ATP = 3-O-(5'-adenylyl)-L-seryl-[protein] + diphosphate. The enzyme catalyses L-threonyl-[protein] + ATP = 3-O-(5'-adenylyl)-L-threonyl-[protein] + diphosphate. It carries out the reaction L-tyrosyl-[protein] + ATP = O-(5'-adenylyl)-L-tyrosyl-[protein] + diphosphate. The catalysed reaction is L-histidyl-[protein] + UTP = N(tele)-(5'-uridylyl)-L-histidyl-[protein] + diphosphate. It catalyses the reaction L-seryl-[protein] + UTP = O-(5'-uridylyl)-L-seryl-[protein] + diphosphate. The enzyme catalyses L-tyrosyl-[protein] + UTP = O-(5'-uridylyl)-L-tyrosyl-[protein] + diphosphate. Its function is as follows. Nucleotidyltransferase involved in the post-translational modification of proteins. It can catalyze the addition of adenosine monophosphate (AMP) or uridine monophosphate (UMP) to a protein, resulting in modifications known as AMPylation and UMPylation. The chain is Protein nucleotidyltransferase YdiU from Rhodopseudomonas palustris (strain BisB18).